A 288-amino-acid chain; its full sequence is Bifunctional protein FolD 1 (288 aa).

NADP(+) is bound by residues 170-172 (GPG) and isoleucine 236.

This sequence belongs to the tetrahydrofolate dehydrogenase/cyclohydrolase family. Homodimer.

It carries out the reaction (6R)-5,10-methylene-5,6,7,8-tetrahydrofolate + NADP(+) = (6R)-5,10-methenyltetrahydrofolate + NADPH. The enzyme catalyses (6R)-5,10-methenyltetrahydrofolate + H2O = (6R)-10-formyltetrahydrofolate + H(+). It functions in the pathway one-carbon metabolism; tetrahydrofolate interconversion. In terms of biological role, catalyzes the oxidation of 5,10-methylenetetrahydrofolate to 5,10-methenyltetrahydrofolate and then the hydrolysis of 5,10-methenyltetrahydrofolate to 10-formyltetrahydrofolate. The sequence is that of Bifunctional protein FolD 1 from Deinococcus geothermalis (strain DSM 11300 / CIP 105573 / AG-3a).